We begin with the raw amino-acid sequence, 89 residues long: uncharacterized protein (89 aa).

This is an uncharacterized protein from Bacillus subtilis (strain 168).